We begin with the raw amino-acid sequence, 261 residues long: Glucosamine-6-phosphate deaminase (261 aa).

Aspartate 67 (proton acceptor; for enolization step) is an active-site residue. The For ring-opening step role is filled by aspartate 136. Histidine 138 acts as the Proton acceptor; for ring-opening step in catalysis. The For ring-opening step role is filled by glutamate 143.

The protein belongs to the glucosamine/galactosamine-6-phosphate isomerase family. NagB subfamily.

The catalysed reaction is alpha-D-glucosamine 6-phosphate + H2O = beta-D-fructose 6-phosphate + NH4(+). The protein operates within amino-sugar metabolism; N-acetylneuraminate degradation; D-fructose 6-phosphate from N-acetylneuraminate: step 5/5. Functionally, catalyzes the reversible isomerization-deamination of glucosamine 6-phosphate (GlcN6P) to form fructose 6-phosphate (Fru6P) and ammonium ion. This is Glucosamine-6-phosphate deaminase from Mycolicibacterium smegmatis (strain ATCC 700084 / mc(2)155) (Mycobacterium smegmatis).